Consider the following 639-residue polypeptide: Chaperone protein HtpG (639 aa).

Residues 1-347 are a; substrate-binding; the sequence is MSHQETHGFQ…SNDLPLNVSR (347 aa). A b region spans residues 348-564; sequence EILQDNKITT…AGEMSSQMIK (217 aa). Positions 565–639 are c; sequence LMQAAGQAVT…MNKMLLASVK (75 aa).

It belongs to the heat shock protein 90 family. Homodimer.

It is found in the cytoplasm. Functionally, molecular chaperone. Has ATPase activity. The protein is Chaperone protein HtpG of Shewanella loihica (strain ATCC BAA-1088 / PV-4).